The sequence spans 531 residues: Dihydropyrimidinase (531 aa).

The Zn(2+) site is built by His-103, His-105, and Lys-193. An N6-carboxylysine modification is found at Lys-193. Tyr-198 is a binding site for substrate. Residues His-226 and His-282 each coordinate Zn(2+). Ser-332 is a binding site for substrate. Asp-359 is a binding site for Zn(2+). Asn-380 lines the substrate pocket.

This sequence belongs to the metallo-dependent hydrolases superfamily. Hydantoinase/dihydropyrimidinase family. In terms of assembly, homotetramer. Zn(2+) is required as a cofactor. In terms of processing, carboxylation allows a single lysine to coordinate two zinc ions.

It is found in the endoplasmic reticulum. The enzyme catalyses 5,6-dihydrouracil + H2O = 3-(carbamoylamino)propanoate + H(+). It participates in amino-acid biosynthesis; beta-alanine biosynthesis. Functionally, catalyzes the second step of the reductive pyrimidine degradation, the reversible hydrolytic ring opening of dihydropyrimidines. Can catalyze the ring opening of 5,6-dihydrouracil to N-carbamoyl-alanine and of 5,6-dihydrothymine to N-carbamoyl-amino isobutyrate. Involved in the recycling of nitrogen from nucleobases to general nitrogen metabolism. The sequence is that of Dihydropyrimidinase from Arabidopsis thaliana (Mouse-ear cress).